The chain runs to 292 residues: Phosphoenolpyruvate guanylyltransferase (292 aa).

Phosphoenolpyruvate-binding residues include T168, G184, and S187. The tract at residues 243–292 (PLVAEDSGGSGGESGTSAESGLSVPPGIVGGTQRRIVSDASGPGRAKKYP) is disordered.

It belongs to the CofC family.

It carries out the reaction phosphoenolpyruvate + GTP + H(+) = enolpyruvoyl-2-diphospho-5'-guanosine + diphosphate. The protein operates within cofactor biosynthesis; coenzyme F420 biosynthesis. Guanylyltransferase that catalyzes the activation of phosphoenolpyruvate (PEP) as enolpyruvoyl-2-diphospho-5'-guanosine, via the condensation of PEP with GTP. It is involved in the biosynthesis of coenzyme F420, a hydride carrier cofactor. This chain is Phosphoenolpyruvate guanylyltransferase, found in Frankia casuarinae (strain DSM 45818 / CECT 9043 / HFP020203 / CcI3).